Consider the following 132-residue polypeptide: Large ribosomal subunit protein bL17 (132 aa).

The protein belongs to the bacterial ribosomal protein bL17 family. Part of the 50S ribosomal subunit. Contacts protein L32.

This is Large ribosomal subunit protein bL17 from Albidiferax ferrireducens (strain ATCC BAA-621 / DSM 15236 / T118) (Rhodoferax ferrireducens).